The chain runs to 363 residues: Flagellar P-ring protein (363 aa).

The first 20 residues, 1–20, serve as a signal peptide directing secretion; that stretch reads MKIKLILACALMVFSAASSA.

It belongs to the FlgI family. In terms of assembly, the basal body constitutes a major portion of the flagellar organelle and consists of four rings (L,P,S, and M) mounted on a central rod.

It is found in the periplasm. The protein localises to the bacterial flagellum basal body. Its function is as follows. Assembles around the rod to form the L-ring and probably protects the motor/basal body from shearing forces during rotation. In Shewanella loihica (strain ATCC BAA-1088 / PV-4), this protein is Flagellar P-ring protein.